Consider the following 405-residue polypeptide: Acetylornithine aminotransferase 1 (405 aa).

Residues 103-104 and Phe-136 each bind pyridoxal 5'-phosphate; that span reads GA. Arg-139 contacts N(2)-acetyl-L-ornithine. 221–224 provides a ligand contact to pyridoxal 5'-phosphate; it reads DEVQ. Lys-250 is modified (N6-(pyridoxal phosphate)lysine). Ser-278 contacts N(2)-acetyl-L-ornithine. A pyridoxal 5'-phosphate-binding site is contributed by Thr-279.

This sequence belongs to the class-III pyridoxal-phosphate-dependent aminotransferase family. ArgD subfamily. Homodimer. Requires pyridoxal 5'-phosphate as cofactor.

It is found in the cytoplasm. It carries out the reaction N(2)-acetyl-L-ornithine + 2-oxoglutarate = N-acetyl-L-glutamate 5-semialdehyde + L-glutamate. It participates in amino-acid biosynthesis; L-arginine biosynthesis; N(2)-acetyl-L-ornithine from L-glutamate: step 4/4. This Bradyrhizobium diazoefficiens (strain JCM 10833 / BCRC 13528 / IAM 13628 / NBRC 14792 / USDA 110) protein is Acetylornithine aminotransferase 1.